The chain runs to 116 residues: Iron-sulfur cluster insertion protein ErpA (116 aa).

Iron-sulfur cluster-binding residues include Cys-44, Cys-108, and Cys-110.

It belongs to the HesB/IscA family. In terms of assembly, homodimer. The cofactor is iron-sulfur cluster.

In terms of biological role, required for insertion of 4Fe-4S clusters for at least IspG. The polypeptide is Iron-sulfur cluster insertion protein ErpA (Francisella philomiragia subsp. philomiragia (strain ATCC 25017 / CCUG 19701 / FSC 153 / O#319-036)).